Here is a 227-residue protein sequence, read N- to C-terminus: Uridylate kinase (227 aa).

11–12 is a binding site for ATP; the sequence is GS. UMP is bound at residue Gly-45. ATP is bound by residues Gly-46 and Arg-50. Residues Asp-67 and 114–120 contribute to the UMP site; that span reads TEPGHTT. Residues Thr-140, Tyr-146, and Asp-149 each contribute to the ATP site.

This sequence belongs to the UMP kinase family. In terms of assembly, homohexamer.

It is found in the cytoplasm. The enzyme catalyses UMP + ATP = UDP + ADP. It participates in pyrimidine metabolism; CTP biosynthesis via de novo pathway; UDP from UMP (UMPK route): step 1/1. Its activity is regulated as follows. Inhibited by UTP. In terms of biological role, catalyzes the reversible phosphorylation of UMP to UDP. This Thermoplasma volcanium (strain ATCC 51530 / DSM 4299 / JCM 9571 / NBRC 15438 / GSS1) protein is Uridylate kinase.